Reading from the N-terminus, the 342-residue chain is uncharacterized protein (342 aa).

This is an uncharacterized protein from Acanthamoeba polyphaga (Amoeba).